Here is a 195-residue protein sequence, read N- to C-terminus: Segregation and condensation protein B (195 aa).

The protein belongs to the ScpB family. In terms of assembly, homodimer. Homodimerization may be required to stabilize the binding of ScpA to the Smc head domains. Component of a cohesin-like complex composed of ScpA, ScpB and the Smc homodimer, in which ScpA and ScpB bind to the head domain of Smc. The presence of the three proteins is required for the association of the complex with DNA.

Its subcellular location is the cytoplasm. Participates in chromosomal partition during cell division. May act via the formation of a condensin-like complex containing Smc and ScpA that pull DNA away from mid-cell into both cell halves. The chain is Segregation and condensation protein B from Clostridium perfringens (strain SM101 / Type A).